A 159-amino-acid chain; its full sequence is 2-C-methyl-D-erythritol 2,4-cyclodiphosphate synthase (159 aa).

Asp10 and His12 together coordinate a divalent metal cation. 4-CDP-2-C-methyl-D-erythritol 2-phosphate-binding positions include 10 to 12 and 36 to 37; these read DVH and HS. His44 lines the a divalent metal cation pocket. Residues 58–60, 134–137, Phe141, and Arg144 each bind 4-CDP-2-C-methyl-D-erythritol 2-phosphate; these read DIG and TTTE.

It belongs to the IspF family. Homotrimer. It depends on a divalent metal cation as a cofactor.

It catalyses the reaction 4-CDP-2-C-methyl-D-erythritol 2-phosphate = 2-C-methyl-D-erythritol 2,4-cyclic diphosphate + CMP. The protein operates within isoprenoid biosynthesis; isopentenyl diphosphate biosynthesis via DXP pathway; isopentenyl diphosphate from 1-deoxy-D-xylulose 5-phosphate: step 4/6. Its function is as follows. Involved in the biosynthesis of isopentenyl diphosphate (IPP) and dimethylallyl diphosphate (DMAPP), two major building blocks of isoprenoid compounds. Catalyzes the conversion of 4-diphosphocytidyl-2-C-methyl-D-erythritol 2-phosphate (CDP-ME2P) to 2-C-methyl-D-erythritol 2,4-cyclodiphosphate (ME-CPP) with a corresponding release of cytidine 5-monophosphate (CMP). The chain is 2-C-methyl-D-erythritol 2,4-cyclodiphosphate synthase from Bacteroides thetaiotaomicron (strain ATCC 29148 / DSM 2079 / JCM 5827 / CCUG 10774 / NCTC 10582 / VPI-5482 / E50).